The sequence spans 218 residues: Phosphoribosylformylglycinamidine synthase subunit PurQ (218 aa).

The Glutamine amidotransferase type-1 domain maps to 2-218; the sequence is SIAVLRFPGT…GARMLRGLAC (217 aa). C86 (nucleophile) is an active-site residue. Residues H195 and E197 contribute to the active site.

In terms of assembly, part of the FGAM synthase complex composed of 1 PurL, 1 PurQ and 2 PurS subunits.

It localises to the cytoplasm. The catalysed reaction is N(2)-formyl-N(1)-(5-phospho-beta-D-ribosyl)glycinamide + L-glutamine + ATP + H2O = 2-formamido-N(1)-(5-O-phospho-beta-D-ribosyl)acetamidine + L-glutamate + ADP + phosphate + H(+). It carries out the reaction L-glutamine + H2O = L-glutamate + NH4(+). It participates in purine metabolism; IMP biosynthesis via de novo pathway; 5-amino-1-(5-phospho-D-ribosyl)imidazole from N(2)-formyl-N(1)-(5-phospho-D-ribosyl)glycinamide: step 1/2. Its function is as follows. Part of the phosphoribosylformylglycinamidine synthase complex involved in the purines biosynthetic pathway. Catalyzes the ATP-dependent conversion of formylglycinamide ribonucleotide (FGAR) and glutamine to yield formylglycinamidine ribonucleotide (FGAM) and glutamate. The FGAM synthase complex is composed of three subunits. PurQ produces an ammonia molecule by converting glutamine to glutamate. PurL transfers the ammonia molecule to FGAR to form FGAM in an ATP-dependent manner. PurS interacts with PurQ and PurL and is thought to assist in the transfer of the ammonia molecule from PurQ to PurL. The protein is Phosphoribosylformylglycinamidine synthase subunit PurQ of Wolinella succinogenes (strain ATCC 29543 / DSM 1740 / CCUG 13145 / JCM 31913 / LMG 7466 / NCTC 11488 / FDC 602W) (Vibrio succinogenes).